Consider the following 393-residue polypeptide: GDSL esterase/lipase At1g28600 (393 aa).

Residues 1–22 form the signal peptide; it reads MASLDSLVIFLFSTLFVTIVSS. Ser-38 acts as the Nucleophile in catalysis. Residues Asn-133 and Asn-317 are each glycosylated (N-linked (GlcNAc...) asparagine). Residues Asp-340 and His-343 contribute to the active site. N-linked (GlcNAc...) asparagine glycosylation is present at Asn-382.

The protein belongs to the 'GDSL' lipolytic enzyme family.

Its subcellular location is the secreted. This Arabidopsis thaliana (Mouse-ear cress) protein is GDSL esterase/lipase At1g28600.